A 531-amino-acid chain; its full sequence is MELASTMSVAMALAAAIFVVLCSVVASARGRREKALKLPPGPRGWPVLGSLGALAGALPPHRALAALAARHGPLMHLRLGSYHTVVASSADAARLVLRTHDSALADRPDTAAGEITSYGYLGIVHTPRGAYWRMARRLCATELFSARRVESFQDVRAQEMRALARGLFGCAAGRRAVAVREHVAGATMRNILRMAVGEKWSGCYGSPEGEAFRRSLDEAFAATGAVSNVGEWVPWLGWLDVQGFKRKMKRLHDLHDHFYEKILVDHEERRRLAQASGGEFVATDLVDVLLQLSEESTKLESESEARLPRDGVKALIQDIIAGGTESSAVTIEWAMAELLRHPEAMAKATDELDRVVGSGRWVAERDLPELHYIDAVVKETLRLHPVGPLLVPHYARERTVVAGYDVPAGARVLVNAWAIARDPASWPDAPDAFQPERFLGAAAAVDVRGAHFELLPFGSGRRICPAYDLAMKLVAAGVANLVHGFAWRLPDGVAAEDVSMEEHVGLSTRRKVPLFAVAEPRLPVHLYSATE.

Residues 6-26 (TMSVAMALAAAIFVVLCSVVA) form a helical membrane-spanning segment. Residue C464 coordinates heme.

Belongs to the cytochrome P450 family. It depends on heme as a cofactor.

The protein resides in the membrane. It catalyses the reaction (6E,10E)-geranyllinalool + reduced [NADPH--hemoprotein reductase] + O2 = (3E,7E)-4,8,12-trimethyltrideca 1,3,7,11-tetraene + but-3-en-2-one + oxidized [NADPH--hemoprotein reductase] + 2 H2O + H(+). The enzyme catalyses (3S,6E)-nerolidol + reduced [NADPH--hemoprotein reductase] + O2 = (3E)-4,8-dimethylnona-1,3,7-triene + but-3-en-2-one + oxidized [NADPH--hemoprotein reductase] + 2 H2O + H(+). The protein operates within secondary metabolite biosynthesis; terpenoid biosynthesis. Involved in the biosynthesis of homoterpenes, attractants of herbivores parasitoids and predators (e.g. predatory mites and parasitoid wasps). Component of the volatile terpenes biosynthesis pathways. Converts mainly nerolidol to dimethylnonatriene (DMNT) and, to a lower extent, geranyllinalool to trimethyltridecatetraene (TMTT). In Zea mays (Maize), this protein is Dimethylnonatriene synthase.